The following is a 185-amino-acid chain: Isopentenyl-diphosphate Delta-isomerase (185 aa).

Residues H27 and H34 each coordinate Mn(2+). A Nudix hydrolase domain is found at 32-168; it reads PLHLAFSCHL…PWAFSPWLTL (137 aa). The active site involves C69. C69 contacts Mg(2+). A Mn(2+)-binding site is contributed by H71. A Mg(2+)-binding site is contributed by E89. The Mn(2+) site is built by E118 and E120. E120 is an active-site residue.

The protein belongs to the IPP isomerase type 1 family. The cofactor is Mg(2+). Requires Mn(2+) as cofactor.

It localises to the cytoplasm. The catalysed reaction is isopentenyl diphosphate = dimethylallyl diphosphate. It functions in the pathway isoprenoid biosynthesis; dimethylallyl diphosphate biosynthesis; dimethylallyl diphosphate from isopentenyl diphosphate: step 1/1. In terms of biological role, catalyzes the 1,3-allylic rearrangement of the homoallylic substrate isopentenyl (IPP) to its highly electrophilic allylic isomer, dimethylallyl diphosphate (DMAPP). The polypeptide is Isopentenyl-diphosphate Delta-isomerase (Leifsonia xyli subsp. xyli (strain CTCB07)).